Consider the following 405-residue polypeptide: Eukaryotic initiation factor 4A (405 aa).

Residues 32–60 carry the Q motif motif; sequence PTFESMGLREELLRGIFNYGFEKPSAIQQ. The Helicase ATP-binding domain maps to 63–233; that stretch reads ILPIIKGRDT…EKFMTKPVRI (171 aa). Residue 76–83 coordinates ATP; it reads AQSGTGKT. Residues 181-184 carry the DEAD box motif; it reads DEAD. The Helicase C-terminal domain occupies 244-405; the sequence is GIKQFFVSVE…EMPVNFASII (162 aa).

The protein belongs to the DEAD box helicase family. eIF4A subfamily.

It localises to the cytoplasm. The enzyme catalyses ATP + H2O = ADP + phosphate + H(+). Its function is as follows. ATP-dependent RNA helicase which is a subunit of the eIF4F complex involved in cap recognition and is required for mRNA binding to ribosome. In the current model of translation initiation, eIF4A unwinds RNA secondary structures in the 5'-UTR of mRNAs which is necessary to allow efficient binding of the small ribosomal subunit, and subsequent scanning for the initiator codon. The sequence is that of Eukaryotic initiation factor 4A (tifA) from Dictyostelium discoideum (Social amoeba).